The chain runs to 913 residues: Protein ECT2 (913 aa).

N-acetylalanine is present on alanine 2. 2 consecutive BRCT domains span residues 176–260 (MLNL…AAVD) and 266–354 (FKVP…MYLY). Threonine 359 is modified (phosphothreonine; by PKC/PRKCI). A phosphoserine mark is found at serine 367 and serine 370. A Phosphothreonine modification is found at threonine 373. Residue serine 376 is modified to Phosphoserine. Short sequence motifs (nuclear localization signal) lie at residues 378 to 382 (RKRRR) and 401 to 405 (PRKRP). Disordered stretches follow at residues 389–415 (QLSR…SIGS) and 427–450 (IHYG…PPKQ). Threonine 444 is subject to Phosphothreonine; by CDK1. In terms of domain architecture, DH spans 452–641 (ARWQVAKELY…KEVMTHINED (190 aa)). Lysine 611 is covalently cross-linked (Glycyl lysine isopeptide (Lys-Gly) (interchain with G-Cter in SUMO2)). The 120-residue stretch at 675 to 794 (RVETVSLGEH…KMLCRHVANT (120 aa)) folds into the PH domain. 2 positions are modified to phosphoserine: serine 716 and serine 842. Threonine 846 carries the phosphothreonine; by CDK1 modification. The tract at residues 853–874 (MALSSSHSSEGRSPPSSGKLAV) is disordered. Residues 856-870 (SSSHSSEGRSPPSSG) show a composition bias toward low complexity. Serine 861 and serine 865 each carry phosphoserine.

As to quaternary structure, homodimer. Homooligomer. Found in the centralspindlin complex. Interacts with NR1I3. Interacts (Thr-359 phosphorylated form) with PARD6A; the interaction is observed in cancer cells. Interacts (Thr-359 phosphorylated form) with PRKCI; the interaction is observed in cancer cells. Interacts with PKP4; the interaction is observed at the midbody. Interacts with RACGAP1; the interaction is direct, occurs in a microtubule-dependent manner, occurs at anaphase and during cytokinesis, is inhibited in metaphase by phosphorylation of ECT2 on Thr-373 and is stimulated in early anaphase by dephosphorylation of ECT2 probably on Thr-373 through CDK1 activity. Interacts with PLK1; the interaction is stimulated upon its phosphorylation on Thr-444. Interacts with RHOA; the interaction results in allosteric activation of ECT2. Interacts with KIF23, PARD3, PARD6B and PRKCQ. Interacts with NEDD9/HEF1. Post-translationally, phosphorylated by PLK1 in vitro. Hyperphosphorylated during the G2 phase of the cell cycle. Phosphorylation at Thr-373 occurs during the G2/M phase, relieves its auto-inhibition status and stimulates its GEF activity. Phosphorylation at Thr-444 in G2/M phase is required for subsequent binding with PLK1 and Rho exchange activation. Dephosphorylated at the time of cytokinesis. Phosphorylation at Thr-359 is required for its transformation activity in cancer cells. As to expression, highest expression in testis. Also detectable in brain, kidney, liver and spleen.

It is found in the nucleus. The protein localises to the cytoplasm. It localises to the cytoskeleton. The protein resides in the spindle. Its subcellular location is the cleavage furrow. It is found in the midbody. The protein localises to the cell junction. It localises to the tight junction. With respect to regulation, autoinhibited by the C-terminal PH domain which folds back and binds to the surface of the DH domain, blocking binding of RHOA to the catalytic center of the DH domain. The 2nd BRCT domain is also involved in inhibition, probably by helping to impede RHOA binding. Allosterically activated by binding of activated GTP-bound RHOA to the PH domain which stimulates the release of PH inhibition and promotes the binding of substrate RHOA to the catalytic center. Binding of phosphorylated RACGAP1 to the N-terminal BRCT domain-containing region also releases autoinhibition. Functionally, guanine nucleotide exchange factor (GEF) that catalyzes the exchange of GDP for GTP. Promotes guanine nucleotide exchange on the Rho family members of small GTPases, like RHOA, RHOC, RAC1 and CDC42. Required for signal transduction pathways involved in the regulation of cytokinesis. Component of the centralspindlin complex that serves as a microtubule-dependent and Rho-mediated signaling required for the myosin contractile ring formation during the cell cycle cytokinesis. Regulates the translocation of RHOA from the central spindle to the equatorial region. Plays a role in the control of mitotic spindle assembly; regulates the activation of CDC42 in metaphase for the process of spindle fibers attachment to kinetochores before chromosome congression. Involved in the regulation of epithelial cell polarity; participates in the formation of epithelial tight junctions in a polarity complex PARD3-PARD6-protein kinase PRKCQ-dependent manner. Plays a role in the regulation of neurite outgrowth. Inhibits phenobarbital (PB)-induced NR1I3 nuclear translocation. Stimulates the activity of RAC1 through its association with the oncogenic PARD6A-PRKCI complex in cancer cells, thereby acting to coordinately drive tumor cell proliferation and invasion. Also stimulates genotoxic stress-induced RHOB activity in breast cancer cells leading to their cell death. The sequence is that of Protein ECT2 (Ect2) from Mus musculus (Mouse).